Here is a 367-residue protein sequence, read N- to C-terminus: Serine/threonine-protein kinase Sgk2 (367 aa).

The interval 1 to 28 is disordered; sequence MASSPVGVPSPQPSRANGNINLGPSANP. Phosphoserine is present on Ser-10. Positions 15 to 28 are enriched in polar residues; it reads RANGNINLGPSANP. Positions 35 to 292 constitute a Protein kinase domain; that stretch reads FDFLKVIGKG…FLDIKNHMFF (258 aa). ATP contacts are provided by residues 41–49 and Lys-64; that span reads IGKGNYGKV. The short motif at 68 to 77 is the Nuclear localization signal element; that stretch reads KKSILKNKEQ. The Proton acceptor role is filled by Asp-159. Position 193 is a phosphothreonine; by PDPK1 (Thr-193). The AGC-kinase C-terminal domain maps to 293–367; sequence SPINWDDLYH…AQDDDDILDS (75 aa). A phosphoserine mark is found at Ser-334 and Ser-356. Tyr-357 carries the phosphotyrosine modification.

It belongs to the protein kinase superfamily. AGC Ser/Thr protein kinase family. Post-translationally, activated by phosphorylation on Ser-356 by an unknown kinase (may be mTORC2 but not confirmed), transforming it into a substrate for PDPK1 which then phosphorylates it on Thr-193. Expressed in the proximal tubule and thick ascending limb of the loop of Henle (TALH).

It localises to the cytoplasm. The protein resides in the nucleus. It carries out the reaction L-seryl-[protein] + ATP = O-phospho-L-seryl-[protein] + ADP + H(+). The enzyme catalyses L-threonyl-[protein] + ATP = O-phospho-L-threonyl-[protein] + ADP + H(+). With respect to regulation, two specific sites, one in the kinase domain (Thr-193) and the other in the C-terminal regulatory region (Ser-356), need to be phosphorylated for its full activation. Functionally, serine/threonine-protein kinase which is involved in the regulation of a wide variety of ion channels, membrane transporters, cell growth, survival and proliferation. Up-regulates Na(+) channels: SCNN1A/ENAC, K(+) channels: KCNA3/Kv1.3, KCNE1 and KCNQ1, amino acid transporter: SLC6A19, glutamate transporter: SLC1A6/EAAT4, glutamate receptors: GRIA1/GLUR1 and GRIK2/GLUR6, Na(+)/H(+) exchanger: SLC9A3/NHE3, and the Na(+)/K(+) ATPase. The polypeptide is Serine/threonine-protein kinase Sgk2 (Sgk2) (Rattus norvegicus (Rat)).